A 20-amino-acid chain; its full sequence is Disintegrin (20 aa).

The Disintegrin domain maps to 1–20 (EAGEECDCGTPENPCCDAAT). Cystine bridges form between C6–C15 and C8–C16.

This sequence belongs to the venom metalloproteinase (M12B) family. P-II subfamily. P-IIa sub-subfamily. As to quaternary structure, monomer. In terms of tissue distribution, expressed by the venom gland.

The protein resides in the secreted. Inhibits fibrinogen interaction with platelets. Acts by binding to alpha-IIb/beta-3 (ITGA2B/ITGB3) on the platelet surface and inhibits aggregation induced by ADP, thrombin, platelet-activating factor and collagen. The protein is Disintegrin of Bothrops fonsecai (Fonseca's lancehead).